Here is a 562-residue protein sequence, read N- to C-terminus: MCEHKANNKNDGEFVNLKEKNENNHCGNTKSTIADCDDDYSIITLCTKCLSTKTEVNKNKIILDSKALKDSRTKRRSSVNINIDILNNNLNLSPYFDRSQIVQETILMNNDDLEKLYELDKYKLGKGSYGNVVKAINKKTGQAKAIKIIDKKRINNIERLKREILIMKQMDHPNIIKLYEVYEDNEKLYLVLELCTGGELFDKIVKHGSFSEYETYKIMKQIFSALAYCHSKNIIHRDLKPENILYVDSSDDSPIQIIDWGFASKCMNNHNLKSVVGTPYYIAPEILKGKYDKKCDIWSSGVIMYILLCGYPPFNGKNNDDILKKVKKGEFVFDSNYWSKISLDAKELICECLNYNYKERIDVHKIVNHKWFIKFKNYNHITINKHLSKELIEKFKKFHKLCKIKKLAITCIAYQLNKKKFGKMKKTFEAFDHNGDGVLTISEIFQCLKVGDNEIDRDLYYLLKQLDTDGNGLIDYTEFLAACLDHSILEQDAVCRNAFKIFDANGDGIITKDELLNVLSFSNDQMPFSKEIIENVIKEVDANNDGYIDYDEFYKMMSGRQS.

The Protein kinase domain occupies 118-372 (ELDKYKLGKG…VHKIVNHKWF (255 aa)). ATP-binding positions include 124-132 (LGKGSYGNV) and Lys-147. Residue Asp-238 is the Proton acceptor of the active site. Positions 394–402 (KFKKFHKLC) match the J domain autoinhibitory motif motif. The interval 394 to 429 (KFKKFHKLCKIKKLAITCIAYQLNKKKFGKMKKTFE) is j domain. A J domain EF-hand interaction motif motif is present at residues 403–412 (KIKKLAITCI). 4 consecutive EF-hand domains span residues 419 to 453 (KKFG…VGDN), 454 to 489 (EIDR…HSIL), 490 to 525 (EQDA…SNDQ), and 528 to 562 (FSKE…GRQS). 17 residues coordinate Ca(2+): Asp-432, Asn-434, Asp-436, Glu-443, Asp-467, Asp-469, Asn-471, Glu-478, Asp-503, Asn-505, Asp-507, Glu-514, Asp-541, Asn-543, Asp-545, Tyr-547, and Glu-552.

It belongs to the protein kinase superfamily. Ser/Thr protein kinase family. CDPK subfamily. The cofactor is Mg(2+). Post-translationally, may be palmitoylated. Autophosphorylated in vitro.

The protein localises to the cytoplasm. Its subcellular location is the cytoplasmic vesicle. It is found in the secretory vesicle. The protein resides in the microneme membrane. It localises to the cell membrane. The catalysed reaction is L-seryl-[protein] + ATP = O-phospho-L-seryl-[protein] + ADP + H(+). It carries out the reaction L-threonyl-[protein] + ATP = O-phospho-L-threonyl-[protein] + ADP + H(+). Its activity is regulated as follows. Activated by calcium. Upon calcium binding to the EF-hand domains, the C-terminus of the junction domain (J domain) undergoes a conformational change which results in the dissociation of the pseudo-substrate inhibitory motif from the catalytic domain. This, in turn, may facilitate the autophosphorylation of the activation loop at Thr-278, which leads to the kinase activation. Calcium-dependent protein kinase which acts as a sensor and effector of intracellular Ca(2+) levels probably in part downstream of cGMP-activated PKG kinase. Plays a central role in host erythrocytes and hepatocytes infection cycles. During the liver stage, involved in sporozoite motility and thus in sporozoite invasion of host hepatocytes, probably together with CDPK1 and CDPK4. Involved in merosome egress from host hepatocytes, probably together with CDPK4. Required for the release of hepatic merozoites from merosomes in the host blood stream. During the asexual blood stage, required for merozoite egress from host erythrocytes by triggering microneme secretion. Phosphorylates transporter NPT1 at late schizont stage. The protein is Calcium-dependent protein kinase 5 of Plasmodium berghei (strain Anka).